We begin with the raw amino-acid sequence, 224 residues long: N6-methyladenosine RNA demethylase ALKBH (224 aa).

The Fe2OG dioxygenase domain occupies 93–222; the sequence is LAQAAIVNFY…RINLNVRQMR (130 aa). Positions 111, 113, and 178 each coordinate Fe cation. Residue arginine 213 coordinates 2-oxoglutarate.

It belongs to the alkB family. The cofactor is Fe(2+).

The enzyme catalyses an N(6)-methyladenosine in mRNA + 2-oxoglutarate + O2 = an adenosine in mRNA + formaldehyde + succinate + CO2. RNA demethylase that regulates the stability of mRNAs through an m(6)A-dependent manner. M6A is a modification present at internal sites of mRNAs and some non-coding RNAs and plays a role in mRNA stability and processing. Demethylate m6A at position A1935 within the 3'UTR of transcription factor ZAP1 and plays an important role in C.parasitica development and virulence. Target mRNAs are primarily associated with amino-acid biosynthesis, 2-oxocarboxylic acid metabolism, and ABC transporters, as well as alpha-amino acid metabolism, small-molecule biosynthesis, and the sulfite reductase complex (NADPH). This Cryphonectria parasitica (strain ATCC 38755 / EP155) protein is N6-methyladenosine RNA demethylase ALKBH.